The following is a 388-amino-acid chain: Succinate--CoA ligase [ADP-forming] subunit beta (388 aa).

Residues 9–244 (KQLFAEYGLP…PSQDDPREAH (236 aa)) form the ATP-grasp domain. ATP contacts are provided by residues lysine 46, 53-55 (GRG), glutamate 99, threonine 102, and glutamate 107. Positions 199 and 213 each coordinate Mg(2+). Substrate-binding positions include asparagine 264 and 321–323 (GIV).

Belongs to the succinate/malate CoA ligase beta subunit family. As to quaternary structure, heterotetramer of two alpha and two beta subunits. It depends on Mg(2+) as a cofactor.

The catalysed reaction is succinate + ATP + CoA = succinyl-CoA + ADP + phosphate. It carries out the reaction GTP + succinate + CoA = succinyl-CoA + GDP + phosphate. Its pathway is carbohydrate metabolism; tricarboxylic acid cycle; succinate from succinyl-CoA (ligase route): step 1/1. In terms of biological role, succinyl-CoA synthetase functions in the citric acid cycle (TCA), coupling the hydrolysis of succinyl-CoA to the synthesis of either ATP or GTP and thus represents the only step of substrate-level phosphorylation in the TCA. The beta subunit provides nucleotide specificity of the enzyme and binds the substrate succinate, while the binding sites for coenzyme A and phosphate are found in the alpha subunit. This Pseudomonas syringae pv. syringae (strain B728a) protein is Succinate--CoA ligase [ADP-forming] subunit beta.